The primary structure comprises 217 residues: Probable nicotinate-nucleotide adenylyltransferase (217 aa).

This sequence belongs to the NadD family.

The catalysed reaction is nicotinate beta-D-ribonucleotide + ATP + H(+) = deamido-NAD(+) + diphosphate. It functions in the pathway cofactor biosynthesis; NAD(+) biosynthesis; deamido-NAD(+) from nicotinate D-ribonucleotide: step 1/1. Functionally, catalyzes the reversible adenylation of nicotinate mononucleotide (NaMN) to nicotinic acid adenine dinucleotide (NaAD). In Moorella thermoacetica (strain ATCC 39073 / JCM 9320), this protein is Probable nicotinate-nucleotide adenylyltransferase.